A 301-amino-acid polypeptide reads, in one-letter code: Homoserine O-acetyltransferase (301 aa).

The active-site Acyl-thioester intermediate is the C142. Substrate contacts are provided by K163 and S192. The active-site Proton acceptor is H235. E237 is an active-site residue. Position 249 (R249) interacts with substrate.

The protein belongs to the MetA family.

The protein localises to the cytoplasm. The catalysed reaction is L-homoserine + acetyl-CoA = O-acetyl-L-homoserine + CoA. The protein operates within amino-acid biosynthesis; L-methionine biosynthesis via de novo pathway; O-acetyl-L-homoserine from L-homoserine: step 1/1. Functionally, transfers an acetyl group from acetyl-CoA to L-homoserine, forming acetyl-L-homoserine. This Lachnoclostridium phytofermentans (strain ATCC 700394 / DSM 18823 / ISDg) (Clostridium phytofermentans) protein is Homoserine O-acetyltransferase.